The chain runs to 298 residues: uncharacterized protein (298 aa).

Catalysis depends on charge relay system residues Thr43 and Tyr105. Tyr131 acts as the Proton donor in catalysis. The Schiff-base intermediate with substrate role is filled by Lys159.

Belongs to the DapA family. Homotetramer.

Its subcellular location is the cytoplasm. This is an uncharacterized protein from Pyrococcus furiosus (strain ATCC 43587 / DSM 3638 / JCM 8422 / Vc1).